Reading from the N-terminus, the 984-residue chain is Zinc finger and BTB domain-containing protein 4 (984 aa).

A BTB domain is found at 30-131 (CDVTLIAGDT…IYSARLALPG (102 aa)). Residue Lys-40 forms a Glycyl lysine isopeptide (Lys-Gly) (interchain with G-Cter in SUMO2) linkage. 3 disordered regions span residues 71–104 (TGGS…PPRV), 172–210 (MVTS…RRPF), and 227–262 (THEA…ASAL). The segment covering 74–88 (SAPSPATTTAASSSS) has biased composition (low complexity). Positions 165–324 (VPPAPSSMVT…CRYCEKVFAL (160 aa)) are interaction with CBFA2T3. The segment at 210–232 (FPCPRCGKSFIHPKRLQTHEAQC) adopts a C2H2-type 1; atypical zinc-finger fold. Residues 242 to 255 (AGLGPGGSGPGGPA) show a composition bias toward gly residues. C2H2-type zinc fingers lie at residues 285–307 (YVCA…SNVH), 313–335 (YPCR…EVWH), and 341–364 (YQCI…RAFH). Phosphoserine is present on Ser-367. Positions 461-575 (GSSSSGAAGG…GSSQLQAPPP (115 aa)) are disordered. The segment covering 467–477 (AAGGGPVGTGG) has biased composition (gly residues). 2 stretches are compositionally biased toward low complexity: residues 478–488 (SQAASVITYTT) and 507–529 (ATPT…ATAT). Residue Lys-548 forms a Glycyl lysine isopeptide (Lys-Gly) (interchain with G-Cter in SUMO2) linkage. Residues 552–565 (GVSGSGGSPTGTGR) show a composition bias toward gly residues. A Glycyl lysine isopeptide (Lys-Gly) (interchain with G-Cter in SUMO2) cross-link involves residue Lys-590. Disordered regions lie at residues 593-696 (ISET…GERR), 713-734 (RKHQ…RSST), 756-836 (QRHA…VAGG), 853-876 (GGSR…ASEG), and 947-984 (QTAP…GDVG). Acidic residues predominate over residues 604-627 (SGEEVEESEEEEEEEEEEDQEDQE). Basic and acidic residues predominate over residues 628-637 (ESKAGGEDQL). C2H2-type zinc fingers lie at residues 697–719 (HRCG…QEAH) and 736–758 (FTCP…GQRH). Residues Thr-766 and Thr-768 each carry the phosphothreonine; by HIPK2 modification. Residues 807–819 (AAAAAAEASESAS) show a composition bias toward low complexity. The segment covering 948–966 (TAPPTPPTPPPPLPLPVPP) has biased composition (pro residues). At Thr-955 the chain carries Phosphothreonine; by HIPK2.

In terms of assembly, interacts with HIPK2. Interacts with CBFA2T3. Interacts with ZBTB38. Phosphorylated by HIPK2. This phosphorylation reduces stability and triggers ZBTB4 protein degradation in response to DNA damage.

Its subcellular location is the nucleus. It localises to the chromosome. Functionally, transcriptional repressor with bimodal DNA-binding specificity. Represses transcription in a methyl-CpG-dependent manner. Binds with a higher affinity to methylated CpG dinucleotides in the consensus sequence 5'-CGCG-3' but can also bind to the non-methylated consensus sequence 5'-CTGCNA-3' also known as the consensus kaiso binding site (KBS). Can also bind specifically to a single methyl-CpG pair and can bind hemimethylated DNA but with a lower affinity compared to methylated DNA. Plays a role in postnatal myogenesis, may be involved in the regulation of satellite cells self-renewal. This is Zinc finger and BTB domain-containing protein 4 (Zbtb4) from Rattus norvegicus (Rat).